We begin with the raw amino-acid sequence, 28 residues long: Unknown protein from spot 154 of 2D-PAGE of etiolated coleoptile (28 aa).

This Zea mays (Maize) protein is Unknown protein from spot 154 of 2D-PAGE of etiolated coleoptile.